The primary structure comprises 100 residues: NADH-quinone oxidoreductase subunit K (100 aa).

Transmembrane regions (helical) follow at residues 4–24, 28–48, and 60–80; these read LFHG…SLIV, ILFI…ALIV, and IMYI…LALL.

This sequence belongs to the complex I subunit 4L family. As to quaternary structure, NDH-1 is composed of 13 different subunits. Subunits NuoA, H, J, K, L, M, N constitute the membrane sector of the complex.

The protein localises to the cell membrane. It carries out the reaction a quinone + NADH + 5 H(+)(in) = a quinol + NAD(+) + 4 H(+)(out). NDH-1 shuttles electrons from NADH, via FMN and iron-sulfur (Fe-S) centers, to quinones in the respiratory chain. The immediate electron acceptor for the enzyme in this species is believed to be ubiquinone. Couples the redox reaction to proton translocation (for every two electrons transferred, four hydrogen ions are translocated across the cytoplasmic membrane), and thus conserves the redox energy in a proton gradient. This is NADH-quinone oxidoreductase subunit K from Buchnera aphidicola subsp. Acyrthosiphon pisum (strain 5A).